The following is a 222-amino-acid chain: Pre-mRNA cleavage factor Im 25 kDa subunit 1 (222 aa).

The region spanning 67–194 (GLRTCVEAVL…KLLAVPLCQL (128 aa)) is the Nudix hydrolase domain. An interaction with RNA region spans residues 94–96 (SIF). A Nudix box motif is present at residues 101 to 122 (GRLRPGESDIEGLKRKLASKLS).

This sequence belongs to the Nudix hydrolase family. CPSF5 subfamily. Homodimer. Component of the cleavage factor Im (CFIm) complex. Forms a complex with cleavage and polyadenylation specificity factor (CPSF) subunits FIPS5.

Its subcellular location is the nucleus. Component of the cleavage factor Im (CFIm) complex that plays a key role in pre-mRNA 3'-processing. Involved in association with CPSF6 or CPSF7 in pre-MRNA 3'-end poly(A) site cleavage and poly(A) addition. NUDT21/CPSF5 binds to cleavage and polyadenylation RNA substrates. The homodimer mediates simultaneous sequence-specific recognition of two 5'-UGUA-3' elements within the pre-mRNA. Binds to, but does not hydrolyze mono- and di-adenosine nucleotides. May have a role in mRNA export. The polypeptide is Pre-mRNA cleavage factor Im 25 kDa subunit 1 (Arabidopsis thaliana (Mouse-ear cress)).